Consider the following 564-residue polypeptide: Arginine--tRNA ligase (564 aa).

Residues 124–134 (PNIAKDMHVGH) carry the 'HIGH' region motif.

This sequence belongs to the class-I aminoacyl-tRNA synthetase family. In terms of assembly, monomer.

It is found in the cytoplasm. It catalyses the reaction tRNA(Arg) + L-arginine + ATP = L-arginyl-tRNA(Arg) + AMP + diphosphate. The sequence is that of Arginine--tRNA ligase from Chlamydia caviae (strain ATCC VR-813 / DSM 19441 / 03DC25 / GPIC) (Chlamydophila caviae).